The sequence spans 724 residues: MAPTADVLPPVEASTRPGLLVQPSDTKLRKASSFRTEQVVIDGYNLKIQGLVASARYGHVPVLDPSAETRKRIDDSVQSLIAKLDRGESIYGINTGFGGSADSRTANTRALQLALLQMQQCGVLPVPSTFPTGEPSSAPFALPLTDTESSLIMPEAWVRGAIVVRLSSLMRGHSGVRWEVLDKMQKLFLQNNVTPVVPVRSSISASGDLSPLSYVAGALAGQRGIYCFVTDGRGQRVKVTADEACRMHKITPVQYEPKEALGLLNGTAFSASVAGLATYEAENLASLTQLTTAMAVEALKGTDASFAPFIHEIARPHPGQIKSAKFIRALLSGSRLAEHLENEKHVLFSEDNGTLRQDRYTLRTASQWVGPGLEDIENAKRSVDIEINSTTDNPMIDPYDGDGRIHHGGNFQAMAMTNAVEKIRLALCAMGKMTFQQMTELVNPAMNRGLPANLASTPDLSLNFHAKGIDIALASVTSELMFLGNPVSTHVQSAEMANQAINSLALISGRQTLQAIECLSMIQAWSLYLLCQALDIRALQYKVAEQLPTLILASLHSHFGEWMDETKQQEIAAQVLKSMSKRLDETSSKDLRDRLVETYQDASSVLVRYFSELPSGGGADPLRNIVKWRATGVADTEKIYRQVTIEFLDNPYACHASHLLGKTKRAYEFVRKTLGVPMHGKENLNEFKGEFEQWNTTGGYVSVIYASIRDGELYNMLSELERDL.

Y91 (proton donor/acceptor) is an active-site residue. The 5-imidazolinone (Ala-Gly) cross-link spans A205–G207. S206 is subject to 2,3-didehydroalanine (Ser). Positions 265, 357, 363, 393, 467, 495, and 498 each coordinate (E)-cinnamate.

The protein belongs to the PAL/histidase family. Homotetramer. Contains an active site 4-methylidene-imidazol-5-one (MIO), which is formed autocatalytically by cyclization and dehydration of residues Ala-Ser-Gly.

The protein resides in the cytoplasm. The enzyme catalyses L-phenylalanine = (E)-cinnamate + NH4(+). It participates in phenylpropanoid metabolism; trans-cinnamate biosynthesis; trans-cinnamate from L-phenylalanine: step 1/1. Catalyzes the non-oxidative deamination of L-phenylalanine to form trans-cinnamic acid and a free ammonium ion. Facilitates the commitment step in phenylpropanoid pathways that produce secondary metabolites such as lignins, coumarins and flavonoids. The chain is Phenylalanine ammonia-lyase (PAL1) from Mycosarcoma maydis (Corn smut fungus).